The chain runs to 320 residues: MQTRKTFSWIKEQINRSISVSLMIYIITRPSISIAYPIFAQQGYENPREATGRIVCANCHLANKPVDIEVPQTVLPDTVFEAVVRIPYDMQLKQVLANGKRGTLNVGAVLILPEGFELAPADRISPEMKEKIGNLSFQSYRPNKKNILVIGPVPGQKYSEITFPILSPDPATTKEVHFLKYPIYVGGNRGRGQIYPDGSKSNNTVYNATSAGIVGKIIRKEKGGYEITIADASDGRQVVDIIPPGPELLVSEGESIKLDQPLTSNPNVGGFGQGDAEIVLQDPLRVQGLLFFLASVILAQIFLVLKKKQFEKVQLSEMNF.

A signal peptide spans 1-35 (MQTRKTFSWIKEQINRSISVSLMIYIITRPSISIA). Tyr36, Cys56, Cys59, and His60 together coordinate heme. Residues 286–306 (VQGLLFFLASVILAQIFLVLK) form a helical membrane-spanning segment.

Belongs to the cytochrome f family. In terms of assembly, the 4 large subunits of the cytochrome b6-f complex are cytochrome b6, subunit IV (17 kDa polypeptide, petD), cytochrome f and the Rieske protein, while the 4 small subunits are PetG, PetL, PetM and PetN. The complex functions as a dimer. Heme serves as cofactor.

The protein localises to the plastid. It localises to the chloroplast thylakoid membrane. In terms of biological role, component of the cytochrome b6-f complex, which mediates electron transfer between photosystem II (PSII) and photosystem I (PSI), cyclic electron flow around PSI, and state transitions. The chain is Cytochrome f from Daucus carota (Wild carrot).